The following is a 283-amino-acid chain: Agmatinase (283 aa).

6 residues coordinate a divalent metal cation: His112, Asp131, His133, Asp135, Asp211, and Asp213.

The protein belongs to the arginase family. Agmatinase subfamily. As to quaternary structure, homotetramer. A divalent metal cation serves as cofactor.

The enzyme catalyses agmatine + H2O = urea + putrescine. The protein operates within amine and polyamine biosynthesis; putrescine biosynthesis via agmatine pathway; putrescine from agmatine: step 1/1. Inhibited by putrescine. Activity is not affected by arginine and ornithine. Catalyzes the formation of putrescine from agmatine. Cannot use arginine. The sequence is that of Agmatinase from Pyrococcus horikoshii (strain ATCC 700860 / DSM 12428 / JCM 9974 / NBRC 100139 / OT-3).